The sequence spans 435 residues: GTPase Der (435 aa).

2 consecutive EngA-type G domains span residues 3 to 167 (NIVA…KDEG) and 176 to 351 (PRIA…ENRG). GTP is bound by residues 9 to 16 (GRPNVGKS), 56 to 60 (DTGGY), 119 to 122 (NKSD), 182 to 189 (GRPNAGKS), 229 to 233 (DTAGI), and 294 to 297 (NKWD). The KH-like domain occupies 352 to 435 (KRIPTSELND…VPISIVYRKK (84 aa)).

This sequence belongs to the TRAFAC class TrmE-Era-EngA-EngB-Septin-like GTPase superfamily. EngA (Der) GTPase family. As to quaternary structure, associates with the 50S ribosomal subunit.

Functionally, GTPase that plays an essential role in the late steps of ribosome biogenesis. This chain is GTPase Der, found in Cytophaga hutchinsonii (strain ATCC 33406 / DSM 1761 / CIP 103989 / NBRC 15051 / NCIMB 9469 / D465).